The sequence spans 658 residues: Integrator complex subunit 9 (658 aa).

K58 is covalently cross-linked (Glycyl lysine isopeptide (Lys-Gly) (interchain with G-Cter in SUMO2)). Residues 548–572 (DNKHVLQPPPKPTQPTSSKKRKRVN) are disordered. The short motif at 566–570 (KKRKR) is the Nuclear localization signal element.

The protein belongs to the metallo-beta-lactamase superfamily. RNA-metabolizing metallo-beta-lactamase-like family. INTS9 subfamily. Component of the Integrator complex, composed of core subunits INTS1, INTS2, INTS3, INTS4, INTS5, INTS6, INTS7, INTS8, INTS9/RC74, INTS10, INTS11/CPSF3L, INTS12, INTS13, INTS14 and INTS15. The core complex associates with protein phosphatase 2A subunits PPP2CA and PPP2R1A, to form the Integrator-PP2A (INTAC) complex. INTS9 is part of the RNA endonuclease subcomplex, composed of INTS4, INTS9, INTS11 and inositol hexakisphosphate (InsP6). Interacts with WDR73; interaction is required for the assembly of the RNA endonuclease subcomplex in the cytoplasm. Interacts with BRAT1; interaction is required for the assembly of the RNA endonuclease subcomplex. Interacts with ESRRB, ESRRB is not a core component of the Integrator complex and this association is a bridge for the interaction with the multiprotein complex Integrator; attracts the transcriptional machinery.

It is found in the nucleus. Its subcellular location is the cytoplasm. Component of the integrator complex, a multiprotein complex that terminates RNA polymerase II (Pol II) transcription in the promoter-proximal region of genes. The integrator complex provides a quality checkpoint during transcription elongation by driving premature transcription termination of transcripts that are unfavorably configured for transcriptional elongation: the complex terminates transcription by (1) catalyzing dephosphorylation of the C-terminal domain (CTD) of Pol II subunit POLR2A/RPB1 and SUPT5H/SPT5, (2) degrading the exiting nascent RNA transcript via endonuclease activity and (3) promoting the release of Pol II from bound DNA. The integrator complex is also involved in terminating the synthesis of non-coding Pol II transcripts, such as enhancer RNAs (eRNAs), small nuclear RNAs (snRNAs), telomerase RNAs and long non-coding RNAs (lncRNAs). Mediates recruitment of cytoplasmic dynein to the nuclear envelope, probably as component of the integrator complex. The protein is Integrator complex subunit 9 (Ints9) of Mus musculus (Mouse).